We begin with the raw amino-acid sequence, 499 residues long: Probable alpha-L-arabinofuranosidase B (499 aa).

An N-terminal signal peptide occupies residues 1-17 (MFSRRNLLALGLAATVS). Residues 18–335 (AGPCDIYEAG…ENIVAAKYVV (318 aa)) are catalytic. Intrachain disulfides connect Cys21/Cys31, Cys81/Cys86, and Cys176/Cys177. N-linked (GlcNAc...) asparagine glycosylation is present at Asn83. A glycan (N-linked (GlcNAc...) asparagine) is linked at Asn202. Asp219 is a binding site for substrate. Glu221 acts as the Nucleophile in catalysis. Substrate is bound by residues Asn222, Asn223, Gly296, His416, Asn418, Phe419, Asp435, His463, Glu465, Leu468, and Asp488. The interval 336-499 (GSLVSGPSFT…SFEIETAFAS (164 aa)) is ABD. Cys401 and Cys439 are joined by a disulfide.

It belongs to the glycosyl hydrolase 54 family.

The protein resides in the secreted. The catalysed reaction is Hydrolysis of terminal non-reducing alpha-L-arabinofuranoside residues in alpha-L-arabinosides.. The protein operates within glycan metabolism; L-arabinan degradation. Its function is as follows. Alpha-L-arabinofuranosidase involved in the degradation of arabinoxylan, a major component of plant hemicellulose. Able to hydrolyze 1,5-, 1,3- and 1,2-alpha-linkages not only in L-arabinofuranosyl oligosaccharides, but also in polysaccharides containing terminal non-reducing L-arabinofuranoses in side chains, like L-arabinan, arabinogalactan and arabinoxylan. The polypeptide is Probable alpha-L-arabinofuranosidase B (abfB) (Aspergillus awamori (Black koji mold)).